Here is a 343-residue protein sequence, read N- to C-terminus: Heat-inducible transcription repressor HrcA (343 aa).

The protein belongs to the HrcA family.

Its function is as follows. Negative regulator of class I heat shock genes (grpE-dnaK-dnaJ and groELS operons). Prevents heat-shock induction of these operons. This is Heat-inducible transcription repressor HrcA from Bacillus velezensis (strain DSM 23117 / BGSC 10A6 / LMG 26770 / FZB42) (Bacillus amyloliquefaciens subsp. plantarum).